Reading from the N-terminus, the 228-residue chain is Putative L-ribulose-5-phosphate 4-epimerase UlaF (228 aa).

Residues 26–27 (GN), 43–44 (SG), and 72–73 (SS) contribute to the substrate site. Residues D74, H93, and H95 each coordinate Zn(2+). The Proton donor/acceptor role is filled by D118. Position 167 (H167) interacts with Zn(2+). Y225 (proton donor/acceptor) is an active-site residue.

It belongs to the aldolase class II family. AraD/FucA subfamily. Requires Zn(2+) as cofactor.

It catalyses the reaction L-ribulose 5-phosphate = D-xylulose 5-phosphate. It participates in cofactor degradation; L-ascorbate degradation; D-xylulose 5-phosphate from L-ascorbate: step 4/4. Its function is as follows. Catalyzes the isomerization of L-ribulose 5-phosphate to D-xylulose 5-phosphate. Is involved in the anaerobic L-ascorbate utilization. The polypeptide is Putative L-ribulose-5-phosphate 4-epimerase UlaF (Shigella boydii serotype 4 (strain Sb227)).